Here is a 183-residue protein sequence, read N- to C-terminus: uncharacterized protein (183 aa).

Positions 1-182 constitute a Macro domain; the sequence is MIKVVKGDIT…KALKIVGQGG (182 aa).

This is an uncharacterized protein from Pyrococcus furiosus (strain ATCC 43587 / DSM 3638 / JCM 8422 / Vc1).